Here is a 329-residue protein sequence, read N- to C-terminus: Phenylalanine--tRNA ligase alpha subunit (329 aa).

This sequence belongs to the class-II aminoacyl-tRNA synthetase family. Phe-tRNA synthetase alpha subunit type 1 subfamily. As to quaternary structure, tetramer of two alpha and two beta subunits. It depends on Mg(2+) as a cofactor.

It is found in the cytoplasm. The enzyme catalyses tRNA(Phe) + L-phenylalanine + ATP = L-phenylalanyl-tRNA(Phe) + AMP + diphosphate + H(+). The chain is Phenylalanine--tRNA ligase alpha subunit (pheS) from Buchnera aphidicola subsp. Schizaphis graminum (strain Sg).